The following is a 798-amino-acid chain: Protocadherin beta-13 (798 aa).

The N-terminal stretch at 1 to 28 is a signal peptide; it reads MEASGKLICRQRQVLFSFLLLGLSLAGA. At 29–690 the chain is on the extracellular side; the sequence is AEPRSYSVVE…AQADSLTVYL (662 aa). Cadherin domains are found at residues 36–134, 139–243, 248–348, 353–451, and 456–561; these read VVEE…SPVF, MLVK…APEF, YRVQ…APEV, FTSP…APAF, and YTLF…SPFV. N-linked (GlcNAc...) asparagine glycans are attached at residues Asn-418 and Asn-436. The N-linked (GlcNAc...) asparagine glycan is linked to Asn-567. In terms of domain architecture, Cadherin 6 spans 568–671; the sequence is GSAPCTELVP…LVDGFSQPYL (104 aa). A helical membrane pass occupies residues 691 to 711; it reads VVALASVSSLFLFSVLLFVAV. The Cytoplasmic segment spans residues 712–798; that stretch reads RLCRRSRAAS…FPNNFGFNIQ (87 aa).

The protein localises to the cell membrane. Its function is as follows. Potential calcium-dependent cell-adhesion protein. May be involved in the establishment and maintenance of specific neuronal connections in the brain. In Pan troglodytes (Chimpanzee), this protein is Protocadherin beta-13 (PCDHB13).